The sequence spans 872 residues: Chaperone protein ClpB 2 (872 aa).

One can recognise a Clp R domain in the interval 6–148 (PNKFTEKAWE…AEIIKQIRGT (143 aa)). Repeat regions lie at residues 9–73 (FTEK…IAQQ) and 85–148 (LGRS…IRGT). Residues 161-342 (ESLEKYGRDL…RRFQEVLVDE (182 aa)) are NBD1. 208-215 (GEPGVGKT) is a binding site for ATP. The linker stretch occupies residues 343 to 551 (PNVLDTISIL…IAEIISKWTG (209 aa)). Positions 393–527 (IDLVDEAAAK…LETQLAEQQT (135 aa)) form a coiled coil. Positions 561–772 (EKEKLLHLED…RVDETIIFHG (212 aa)) are NBD2. 611–618 (GPTGVGKT) is a binding site for ATP. Positions 773-872 (LQKSELRSIV…TSLRGDLVIV (100 aa)) are C-terminal.

Belongs to the ClpA/ClpB family. Homohexamer. The oligomerization is ATP-dependent.

It is found in the cytoplasm. In terms of biological role, part of a stress-induced multi-chaperone system, it is involved in the recovery of the cell from heat-induced damage, in cooperation with DnaK, DnaJ and GrpE. Acts before DnaK, in the processing of protein aggregates. Protein binding stimulates the ATPase activity; ATP hydrolysis unfolds the denatured protein aggregates, which probably helps expose new hydrophobic binding sites on the surface of ClpB-bound aggregates, contributing to the solubilization and refolding of denatured protein aggregates by DnaK. This chain is Chaperone protein ClpB 2 (clpB2), found in Synechocystis sp. (strain ATCC 27184 / PCC 6803 / Kazusa).